Consider the following 266-residue polypeptide: Ribosomal RNA small subunit methyltransferase A (266 aa).

S-adenosyl-L-methionine is bound by residues histidine 13, leucine 15, glycine 40, glutamate 61, aspartate 85, and asparagine 104.

Belongs to the class I-like SAM-binding methyltransferase superfamily. rRNA adenine N(6)-methyltransferase family. RsmA subfamily.

It localises to the cytoplasm. It catalyses the reaction adenosine(1518)/adenosine(1519) in 16S rRNA + 4 S-adenosyl-L-methionine = N(6)-dimethyladenosine(1518)/N(6)-dimethyladenosine(1519) in 16S rRNA + 4 S-adenosyl-L-homocysteine + 4 H(+). Its function is as follows. Specifically dimethylates two adjacent adenosines (A1518 and A1519) in the loop of a conserved hairpin near the 3'-end of 16S rRNA in the 30S particle. May play a critical role in biogenesis of 30S subunits. This is Ribosomal RNA small subunit methyltransferase A from Parabacteroides distasonis (strain ATCC 8503 / DSM 20701 / CIP 104284 / JCM 5825 / NCTC 11152).